We begin with the raw amino-acid sequence, 534 residues long: 26S proteasome non-ATPase regulatory subunit 3 (534 aa).

Positions 1-16 are enriched in basic and acidic residues; it reads MKQEGSARRRGADKAK. Positions 1–69 are disordered; sequence MKQEGSARRR…AEHSQRELDT (69 aa). The span at 17-32 shows a compositional bias: pro residues; that stretch reads PPPGGGEQEPPPPPAP. A Glycyl lysine isopeptide (Lys-Gly) (interchain with G-Cter in SUMO1); alternate cross-link involves residue lysine 38. Lysine 38 is covalently cross-linked (Glycyl lysine isopeptide (Lys-Gly) (interchain with G-Cter in SUMO2); alternate). In terms of domain architecture, PCI spans 286–465; that stretch reads ARYLYYTGRI…GYVQSKEMID (180 aa). Residues serine 418 and serine 430 each carry the phosphoserine modification. The tract at residues 500–534 is disordered; that stretch reads SYNKDLESAEERREREQQDLEFAKEMAEDDDDSFP. Residues 501–525 show a composition bias toward basic and acidic residues; it reads YNKDLESAEERREREQQDLEFAKEM.

The protein belongs to the proteasome subunit S3 family. In terms of assembly, component of the 19S proteasome regulatory particle complex. The 26S proteasome consists of a 20S core particle (CP) and two 19S regulatory subunits (RP). The regulatory particle is made of a lid composed of 9 subunits including PSMD3, a base containing 6 ATPases and few additional components. Interacts with UBQLN1 (via ubiquitin-like domain). Interacts with ERCC6.

Functionally, component of the 26S proteasome, a multiprotein complex involved in the ATP-dependent degradation of ubiquitinated proteins. This complex plays a key role in the maintenance of protein homeostasis by removing misfolded or damaged proteins, which could impair cellular functions, and by removing proteins whose functions are no longer required. Therefore, the proteasome participates in numerous cellular processes, including cell cycle progression, apoptosis, or DNA damage repair. The protein is 26S proteasome non-ATPase regulatory subunit 3 (PSMD3) of Homo sapiens (Human).